Reading from the N-terminus, the 605-residue chain is uncharacterized protein (605 aa).

The tract at residues 111–151 is disordered; the sequence is VNVNDGKPNDIELSSTSKTENDPPLSLHTTPDDLQGNGVNV.

The protein localises to the golgi apparatus. This is an uncharacterized protein from Schizosaccharomyces pombe (strain 972 / ATCC 24843) (Fission yeast).